The following is a 178-amino-acid chain: Large ribosomal subunit protein uL6 (178 aa).

It belongs to the universal ribosomal protein uL6 family. In terms of assembly, part of the 50S ribosomal subunit.

This protein binds to the 23S rRNA, and is important in its secondary structure. It is located near the subunit interface in the base of the L7/L12 stalk, and near the tRNA binding site of the peptidyltransferase center. This Corynebacterium diphtheriae (strain ATCC 700971 / NCTC 13129 / Biotype gravis) protein is Large ribosomal subunit protein uL6.